The chain runs to 264 residues: Probable septum site-determining protein MinC (264 aa).

The interval 103 to 147 (SHGRRPRGGNDAKDADRNDAQDAQGAPEHAQAAEAPASTSAIPPA) is disordered. The span at 110–122 (GGNDAKDADRNDA) shows a compositional bias: basic and acidic residues. The segment covering 124 to 147 (DAQGAPEHAQAAEAPASTSAIPPA) has biased composition (low complexity).

This sequence belongs to the MinC family. In terms of assembly, interacts with MinD and FtsZ.

Its function is as follows. Cell division inhibitor that blocks the formation of polar Z ring septums. Rapidly oscillates between the poles of the cell to destabilize FtsZ filaments that have formed before they mature into polar Z rings. Prevents FtsZ polymerization. This chain is Probable septum site-determining protein MinC, found in Ralstonia pickettii (strain 12J).